Consider the following 166-residue polypeptide: MAKVESQAGELQEKLIAVNRVSKTVKGGRIMSFTALTVVGDGNGRVGYGYGKAREVPAAIQKAMEQAKRNLSKVELNNGTLHHPVRGVHSGSSVFMKPASQGTGIIAGGAMRAVLEVAGIHNVLAKTYGSTNPINVVRATVDALVQGQSPAQIAAKRGLRVEEILG.

The region spanning 11 to 74 (LQEKLIAVNR…EQAKRNLSKV (64 aa)) is the S5 DRBM domain.

This sequence belongs to the universal ribosomal protein uS5 family. As to quaternary structure, part of the 30S ribosomal subunit. Contacts proteins S4 and S8.

Functionally, with S4 and S12 plays an important role in translational accuracy. Located at the back of the 30S subunit body where it stabilizes the conformation of the head with respect to the body. The sequence is that of Small ribosomal subunit protein uS5 from Aeromonas salmonicida (strain A449).